The following is an 872-amino-acid chain: MSNVTPMMQQYLKIKSEYQDCLLFFRLGDFYEMFYEDAKEASRVLEITLTKRDAKKENPIPMCGVPYHSADSYIDTLVNNGYKVAICEQMEDPKQTKGMVRREVVRIVTPGTVMEQGGVDDKQNNYILSFVMNQPEIALSYCDVSTGELKVTHFNDEATLLNEITTINPNEVVINDNISDHLKRQINMVTETITVRETLSSEIYSVNQTEHKLMYQATQLLLDYIHHTQKRDLSHIEDAVQYAAIDYMKMDFYAKRNLELTESIRLKSKKGTLLWLMDETKTPMGARRLKQWIDRPLISKEQIEARLDIVDEFSAHFIERDTLRTYLNQVYDIERLVGRVSYGNVNARDLIQLKHSISEIPNIKALLNSMNQDTLVQVNQLEPLDDLLDILEQSLVEEPPISVKDGGLFKVGFNMQLDEYLEASKNGKTWLAELQAKERQRTGIKSLKISFNKVFGYFIEITRANLQNFEPSEFGYMRKQTLSNAERFITDELKEKEDIILGAEDKAIELEYQLFVQLREEVKKYTERLQHQAKIISELDCLQSFAEIAQKYNYTRPSFSENKTLELVESRHPVVERVMDYNDYVPNNCRLDNETFIYLITGPNMSGKSTYMRQVAIISIMAQMGAYVPCKEAVLPIFDQIFTRIGAADDLVSGKSTFMVEMLEAQKALTYATEDSLIIFDEIGRGTSTYDGLALAQAMIEYVAETSHAKTLFSTHYHELTTLDQALPSLKNVHVAANEYKGELIFLHKVKDGAVDDSYGIQVAKLADLPEKVISRAQVILSEFEASAGKKSSISNLKMVENEPEINQENSNLSVEETTDTLSQKDFEQASFDLFENDQESEIELQIKNLNLSNMTPIEALVKLSELQNQLK.

602–609 is a binding site for ATP; that stretch reads GPNMSGKS.

This sequence belongs to the DNA mismatch repair MutS family.

In terms of biological role, this protein is involved in the repair of mismatches in DNA. It is possible that it carries out the mismatch recognition step. This protein has a weak ATPase activity. The polypeptide is DNA mismatch repair protein MutS (Staphylococcus aureus (strain MRSA252)).